The chain runs to 869 residues: Leucine--tRNA ligase (869 aa).

Positions 42–52 (PYPSGRLHMGH) match the 'HIGH' region motif. The short motif at 620–624 (KMSKS) is the 'KMSKS' region element. Position 623 (Lys-623) interacts with ATP.

This sequence belongs to the class-I aminoacyl-tRNA synthetase family.

It localises to the cytoplasm. The enzyme catalyses tRNA(Leu) + L-leucine + ATP = L-leucyl-tRNA(Leu) + AMP + diphosphate. This chain is Leucine--tRNA ligase, found in Hamiltonella defensa subsp. Acyrthosiphon pisum (strain 5AT).